Here is a 373-residue protein sequence, read N- to C-terminus: Outer membrane protein assembly factor BamC (373 aa).

Positions 1–16 (MLKQVTPLVLIAAVTA) are cleaved as a signal peptide. Cys-17 is lipidated: N-palmitoyl cysteine. Residue Cys-17 is the site of S-diacylglycerol cysteine attachment.

Belongs to the BamC family. Part of the Bam complex.

The protein resides in the cell outer membrane. Functionally, part of the outer membrane protein assembly complex, which is involved in assembly and insertion of beta-barrel proteins into the outer membrane. The chain is Outer membrane protein assembly factor BamC from Shewanella sediminis (strain HAW-EB3).